The primary structure comprises 509 residues: Lysine--tRNA ligase (509 aa).

Polar residues predominate over residues 1–18 (MSEQNPTQAAKQAPQQEL). A disordered region spans residues 1–20 (MSEQNPTQAAKQAPQQELND). Glu-418 and Glu-425 together coordinate Mg(2+).

This sequence belongs to the class-II aminoacyl-tRNA synthetase family. Homodimer. Mg(2+) serves as cofactor.

Its subcellular location is the cytoplasm. It carries out the reaction tRNA(Lys) + L-lysine + ATP = L-lysyl-tRNA(Lys) + AMP + diphosphate. This chain is Lysine--tRNA ligase, found in Psychromonas ingrahamii (strain DSM 17664 / CCUG 51855 / 37).